A 926-amino-acid polypeptide reads, in one-letter code: Protein O-mannosyl-transferase Tmtc3 (926 aa).

Positions 1–26 (MSTNPNPGIHQYAPSTLPREREREGA) are disordered. At 1–36 (MSTNPNPGIHQYAPSTLPREREREGATNSPQRNLLE) the chain is on the cytoplasmic side. Residues 37 to 57 (FLCICVACIVCYYNSTQCGLV) traverse the membrane as a helical segment. At 58–114 (FDDISAIRDNKDLRPHTPLINVFLNDFWGTPMRKEQSHKSYRPLTVLTFRFNYLLHA) the chain is on the extracellular side. Residues 115-135 (LEPFGYHLVNLLLHLSVCLLW) form a helical membrane-spanning segment. Residues 136–169 (RRVCRLLLRQCAASGSNAISAPSSSSVSQLNTCA) are Cytoplasmic-facing. The helical transmembrane segment at 170 to 190 (FVASLLFAVHPVHTEAVTGVV) threads the bilayer. Over 191–192 (GR) the chain is Extracellular. Residues 193–213 (AELLSSICFLAAFLSYAKSVG) traverse the membrane as a helical segment. Residues 214–222 (DSGCPRRTN) are Cytoplasmic-facing. The next 2 helical transmembrane spans lie at 223–239 (WLTL…ASML) and 240–259 (CKEQ…LFVV). At 260–303 (HQLRPLHLCHFVLRLFDERTEQQSPKLANPSGIRRWSSSTLWKR) the chain is on the cytoplasmic side. A helical membrane pass occupies residues 304-324 (LSFLVGITLTLLVGRVYVMGS). Over 325–345 (QLPIFTRFDNPASAADTPERQ) the chain is Extracellular. The helical transmembrane segment at 346-366 (LTYGYLIYLNCWLLLCPSLLC) threads the bilayer. Topologically, residues 367–384 (CDWTMGTVPLLQGFTDSR) are cytoplasmic. The helical transmembrane segment at 385–405 (NITTLLTFLALGAMVAKTCFT) threads the bilayer. Over 406-419 (RNLALSRTLIMCLG) the chain is Extracellular. The helical transmembrane segment at 420-440 (WMVLPFLPASNLFFPVGFVVA) threads the bilayer. Topologically, residues 441–442 (ER) are cytoplasmic. A helical membrane pass occupies residues 443–463 (ILYMPSMGYCLLVAYGFEQLQ). Topologically, residues 464-926 (RRGSLSWQRF…RPTHKSRKRS (463 aa)) are extracellular. TPR repeat units follow at residues 514-547 (AKLY…QTDD), 548-581 (IGAH…FPQA), 596-630 (LNVF…RSDY), 631-664 (VQAY…DNEN), 665-698 (ADIY…YPEH), 736-769 (EKVY…KADF), 770-803 (RSAL…HPSH), 805-838 (KGLI…DPHN), and 839-872 (TQGL…APAE). Residues Asn-609 and Asn-645 are each glycosylated (N-linked (GlcNAc...) asparagine).

Belongs to the TMTC family.

It is found in the membrane. Its subcellular location is the endoplasmic reticulum. It catalyses the reaction a di-trans,poly-cis-dolichyl beta-D-mannosyl phosphate + L-seryl-[protein] = 3-O-(alpha-D-mannosyl)-L-seryl-[protein] + a di-trans,poly-cis-dolichyl phosphate + H(+). The enzyme catalyses a di-trans,poly-cis-dolichyl beta-D-mannosyl phosphate + L-threonyl-[protein] = 3-O-(alpha-D-mannosyl)-L-threonyl-[protein] + a di-trans,poly-cis-dolichyl phosphate + H(+). Its pathway is protein modification; protein glycosylation. Its function is as follows. Transfers mannosyl residues to the hydroxyl group of serine or threonine residues. This is Protein O-mannosyl-transferase Tmtc3 from Drosophila melanogaster (Fruit fly).